Here is a 100-residue protein sequence, read N- to C-terminus: UPF0251 protein VV2_0946 (100 aa).

Belongs to the UPF0251 family.

The chain is UPF0251 protein VV2_0946 from Vibrio vulnificus (strain CMCP6).